A 171-amino-acid chain; its full sequence is L-methionine sulfoximine/L-methionine sulfone acetyltransferase (171 aa).

The region spanning 1–163 (MTIRFADKAD…DLTFMQLQLD (163 aa)) is the N-acetyltransferase domain. Substrate contacts are provided by residues 72–74 (RSF) and 82–84 (EHS). Acetyl-CoA-binding positions include 85-87 (VYV), 93-98 (GKGLGR), Asn124, and Ser133.

Homodimer.

The catalysed reaction is L-methionine sulfoximine + acetyl-CoA = N-acetyl-L-methionine sulfoximine + CoA + H(+). It carries out the reaction L-methionine sulfone + acetyl-CoA = N-acetyl-L-methionine sulfone + CoA + H(+). Plays a role in the resistance against the toxic effects of L-methionine sulfoximine (MSX), a rare amino acid which inhibits glutamine synthetase (GlnA). Catalyzes the acetylation of MSX. It can also use L-methionine sulfone (MSO). Also catalyzes the acylation of free L-amino acids using an acyl-CoA as acyl donor. This chain is L-methionine sulfoximine/L-methionine sulfone acetyltransferase (yncA), found in Salmonella typhimurium (strain LT2 / SGSC1412 / ATCC 700720).